The chain runs to 77 residues: Large ribosomal subunit protein bL28 (77 aa).

The tract at residues 1 to 21 (MARVCKVTGKRPMTGNNVSHA) is disordered.

Belongs to the bacterial ribosomal protein bL28 family.

This Chromobacterium violaceum (strain ATCC 12472 / DSM 30191 / JCM 1249 / CCUG 213 / NBRC 12614 / NCIMB 9131 / NCTC 9757 / MK) protein is Large ribosomal subunit protein bL28.